We begin with the raw amino-acid sequence, 373 residues long: ATP phosphoribosyltransferase regulatory subunit (373 aa).

It belongs to the class-II aminoacyl-tRNA synthetase family. HisZ subfamily. Heteromultimer composed of HisG and HisZ subunits.

It is found in the cytoplasm. The protein operates within amino-acid biosynthesis; L-histidine biosynthesis; L-histidine from 5-phospho-alpha-D-ribose 1-diphosphate: step 1/9. Required for the first step of histidine biosynthesis. May allow the feedback regulation of ATP phosphoribosyltransferase activity by histidine. This chain is ATP phosphoribosyltransferase regulatory subunit, found in Rhizobium etli (strain ATCC 51251 / DSM 11541 / JCM 21823 / NBRC 15573 / CFN 42).